Consider the following 183-residue polypeptide: ATP synthase subunit b, chloroplastic (183 aa).

A helical transmembrane segment spans residues 27-49; that stretch reads LATNLINLTVVVGVLIFFGKGVL.

Belongs to the ATPase B chain family. As to quaternary structure, F-type ATPases have 2 components, F(1) - the catalytic core - and F(0) - the membrane proton channel. F(1) has five subunits: alpha(3), beta(3), gamma(1), delta(1), epsilon(1). F(0) has four main subunits: a(1), b(1), b'(1) and c(10-14). The alpha and beta chains form an alternating ring which encloses part of the gamma chain. F(1) is attached to F(0) by a central stalk formed by the gamma and epsilon chains, while a peripheral stalk is formed by the delta, b and b' chains.

The protein localises to the plastid. It localises to the chloroplast thylakoid membrane. In terms of biological role, f(1)F(0) ATP synthase produces ATP from ADP in the presence of a proton or sodium gradient. F-type ATPases consist of two structural domains, F(1) containing the extramembraneous catalytic core and F(0) containing the membrane proton channel, linked together by a central stalk and a peripheral stalk. During catalysis, ATP synthesis in the catalytic domain of F(1) is coupled via a rotary mechanism of the central stalk subunits to proton translocation. Component of the F(0) channel, it forms part of the peripheral stalk, linking F(1) to F(0). The sequence is that of ATP synthase subunit b, chloroplastic from Lolium perenne (Perennial ryegrass).